We begin with the raw amino-acid sequence, 275 residues long: Large ribosomal subunit protein uL2cz (275 aa).

Disordered regions lie at residues 1 to 22 (MAIHLYKTSTPSTRNGAVDSQV) and 226 to 275 (NPVD…RRRK).

This sequence belongs to the universal ribosomal protein uL2 family. In terms of assembly, part of the 50S ribosomal subunit.

Its subcellular location is the plastid. It localises to the chloroplast. The protein is Large ribosomal subunit protein uL2cz (rpl2-A) of Chloranthus spicatus (Chulantree).